Consider the following 682-residue polypeptide: MSRKMLVTCALPYANGAIHLGHMLEHIQADIWVRFQRMRGNEIYFVCADDAHGTPIMLNAAKQGITPEQLIEKAKTDHVADFKGFNISFDNYHSTHSEENREITTEMYKKLRANGFIKSRVISQLFDPEKQMFLPDRFVKGTCPKCKAEDQYGDNCEVCASTYSPMDLINPRSAVSGATPIVKESEHFFFDLPSFEGMLKEWTRSGSLQSEIANKMQEWFESGLQQWDISRDAPYFGFPIPDAENKFFYVWLDAPIGYMASFKNLCDRTGLNFDEFWKKDSETELYHFIGKDIVYFHSLFWPAMLDGCELRKPTNVFAHGYVTVDGVKMSKSRGTFIQASTYLKHIDPECLRYYYAAKLNERIEDLDLSLEDFVQRVNSDIVNKLVNLASRNASFIAKRFEGKLADKLEDEALFAEFIAQSEQIAAHYENREFNKAIRLIMDLCDKANKYVDDKAPWVIAKQEGCDAQLQAVCSMGIELFRVLMSYLKPVLPQLAERAEAFLQTELTWDNIQQPLLGQNVAPFKSLFSRLEKKQIDAVIEETKALFAAQNKAEDKKGKQKVENTENTAVEPIAAEITIDDFAKLDLRVAKVISCEAVPESNKLLKFQLDLGDHQRQVLSGIKAAYNNPEELVGRFVIMVANLAPRKMKFGVSEGMILSAGTGGADLFLLSADEGIRPGMQVK.

The 'HIGH' region motif lies at 12 to 22; the sequence is PYANGAIHLGH. Residues C143, C146, C156, and C159 each contribute to the Zn(2+) site. The 'KMSKS' region signature appears at 328–332; it reads KMSKS. ATP is bound at residue K331. The 103-residue stretch at 580-682 folds into the tRNA-binding domain; the sequence is DFAKLDLRVA…EGIRPGMQVK (103 aa).

Belongs to the class-I aminoacyl-tRNA synthetase family. MetG type 1 subfamily. Homodimer. Zn(2+) is required as a cofactor.

Its subcellular location is the cytoplasm. The enzyme catalyses tRNA(Met) + L-methionine + ATP = L-methionyl-tRNA(Met) + AMP + diphosphate. Functionally, is required not only for elongation of protein synthesis but also for the initiation of all mRNA translation through initiator tRNA(fMet) aminoacylation. The polypeptide is Methionine--tRNA ligase (Actinobacillus pleuropneumoniae serotype 7 (strain AP76)).